Reading from the N-terminus, the 738-residue chain is Interleukin-12 receptor subunit beta-1 (738 aa).

Positions Met1–Cys19 are cleaved as a signal peptide. The Extracellular segment spans residues Gln20–Ser565. 5 consecutive Fibronectin type-III domains span residues Gly47–Leu152, Leu152–Leu258, Pro259–Gln359, Glu360–Ser465, and Thr469–Ser565. The N-linked (GlcNAc...) asparagine glycan is linked to Asn50. The cysteines at positions 53 and 63 are disulfide-linked. 6 N-linked (GlcNAc...) asparagine glycosylation sites follow: Asn73, Asn86, Asn130, Asn144, Asn169, and Asn188. Positions Trp244–Ser248 match the WSXWS motif motif. Residues Asn330, Asn368, Asn374, Asn401, Asn463, and Asn477 are each glycosylated (N-linked (GlcNAc...) asparagine). A helical transmembrane segment spans residues Arg566 to Leu591. Residues Asn592 to Ala738 lie on the Cytoplasmic side of the membrane. The short motif at Leu598 to Cys606 is the Box 1 motif element.

It belongs to the type I cytokine receptor family. Type 2 subfamily. Dimer or oligomer; disulfide-linked. Interacts with IL12RB2 to form the high affinity IL12 receptor. Heterodimer with IL23R; in presence of IL23. The heterodimer forms the IL23 receptor.

The protein localises to the membrane. Its function is as follows. Functions as an interleukin receptor which binds interleukin-12 with low affinity and is involved in IL12 transduction. Associated with IL12RB2 it forms a functional, high affinity receptor for IL12. Also associates with IL23R to form the interleukin-23 receptor which functions in IL23 signal transduction probably through activation of the Jak-Stat signaling cascade. The protein is Interleukin-12 receptor subunit beta-1 (Il12rb1) of Mus musculus (Mouse).